We begin with the raw amino-acid sequence, 501 residues long: UDP-N-acetylmuramoyl-L-alanyl-D-glutamate--2,6-diaminopimelate ligase (501 aa).

UDP-N-acetyl-alpha-D-muramoyl-L-alanyl-D-glutamate is bound at residue serine 29. 112 to 118 lines the ATP pocket; it reads GTNGKTS. Residues 161–162, serine 188, and arginine 196 contribute to the UDP-N-acetyl-alpha-D-muramoyl-L-alanyl-D-glutamate site; that span reads TT. Lysine 228 carries the N6-carboxylysine modification. Meso-2,6-diaminopimelate-binding positions include arginine 393, 417 to 420, glycine 468, and glutamate 472; that span reads DNPR. Positions 417–420 match the Meso-diaminopimelate recognition motif motif; the sequence is DNPR.

The protein belongs to the MurCDEF family. MurE subfamily. It depends on Mg(2+) as a cofactor. Carboxylation is probably crucial for Mg(2+) binding and, consequently, for the gamma-phosphate positioning of ATP.

The protein localises to the cytoplasm. It catalyses the reaction UDP-N-acetyl-alpha-D-muramoyl-L-alanyl-D-glutamate + meso-2,6-diaminopimelate + ATP = UDP-N-acetyl-alpha-D-muramoyl-L-alanyl-gamma-D-glutamyl-meso-2,6-diaminopimelate + ADP + phosphate + H(+). It functions in the pathway cell wall biogenesis; peptidoglycan biosynthesis. Catalyzes the addition of meso-diaminopimelic acid to the nucleotide precursor UDP-N-acetylmuramoyl-L-alanyl-D-glutamate (UMAG) in the biosynthesis of bacterial cell-wall peptidoglycan. This Acidovorax sp. (strain JS42) protein is UDP-N-acetylmuramoyl-L-alanyl-D-glutamate--2,6-diaminopimelate ligase.